Reading from the N-terminus, the 432-residue chain is Proline--tRNA ligase (432 aa).

This sequence belongs to the class-II aminoacyl-tRNA synthetase family. ProS type 2 subfamily. As to quaternary structure, homodimer.

It localises to the cytoplasm. The enzyme catalyses tRNA(Pro) + L-proline + ATP = L-prolyl-tRNA(Pro) + AMP + diphosphate. Its function is as follows. Catalyzes the attachment of proline to tRNA(Pro) in a two-step reaction: proline is first activated by ATP to form Pro-AMP and then transferred to the acceptor end of tRNA(Pro). The polypeptide is Proline--tRNA ligase (Rickettsia bellii (strain OSU 85-389)).